The following is a 412-amino-acid chain: Fringe glycosyltransferase (412 aa).

The Cytoplasmic portion of the chain corresponds to 1 to 15 (MMSLTVLSPPQRFKR). A helical; Signal-anchor for type II membrane protein membrane pass occupies residues 16 to 34 (ILQAMMLAVAVVYMTLLLY). Residues 35–412 (QSAYGYPGIQ…FPYFSFCPPR (378 aa)) lie on the Lumenal side of the membrane. Substrate is bound at residue Arg164. 2 disulfide bridges follow: Cys204/Cys215 and Cys233/Cys297. A substrate-binding site is contributed by Asp237. Position 238 (Asp238) interacts with Mn(2+). Asp327 is an active-site residue. His351 provides a ligand contact to Mn(2+). A disulfide bond links Cys400 and Cys409.

This sequence belongs to the glycosyltransferase 31 family. It depends on Mn(2+) as a cofactor. As to expression, expressed in dorsal cells.

It localises to the golgi apparatus membrane. It carries out the reaction 3-O-(alpha-L-fucosyl)-L-threonyl-[EGF-like domain protein] + UDP-N-acetyl-alpha-D-glucosamine = 3-O-(N-acetyl-beta-D-glucosaminyl-(1-&gt;3)-alpha-L-fucosyl)-L-threonyl-[EGF-like domain protein] + UDP + H(+). It catalyses the reaction 3-O-(alpha-L-fucosyl)-L-seryl-[EGF-like domain protein] + UDP-N-acetyl-alpha-D-glucosamine = 3-O-(N-acetyl-beta-D-glucosaminyl-(1-&gt;3)-alpha-L-fucosyl)-L-seryl-[EGF-like domain protein] + UDP + H(+). Its function is as follows. Glycosyltransferase involved in the elongation of O-linked ligands to activate Notch signaling. Possesses fucose-specific beta-1,3-N-acetylglucosaminyltransferase activity; extends the O-linked fucose on the Notch EGF repeats. Boundary-specific cell-signaling molecule that is responsible for dorsal-ventral cell interactions during wing development. The chain is Fringe glycosyltransferase (fng) from Drosophila melanogaster (Fruit fly).